Consider the following 602-residue polypeptide: Aspartate--tRNA(Asp/Asn) ligase (602 aa).

Position 176 (Glu176) interacts with L-aspartate. The tract at residues 200–203 is aspartate; the sequence is QQFK. L-aspartate-binding residues include Arg222 and His452. Residue 222–224 participates in ATP binding; that stretch reads RDE. Glu490 contributes to the ATP binding site. Arg497 serves as a coordination point for L-aspartate. 542-545 contributes to the ATP binding site; sequence GIDR.

Belongs to the class-II aminoacyl-tRNA synthetase family. Type 1 subfamily. As to quaternary structure, homodimer.

It is found in the cytoplasm. The enzyme catalyses tRNA(Asx) + L-aspartate + ATP = L-aspartyl-tRNA(Asx) + AMP + diphosphate. In terms of biological role, aspartyl-tRNA synthetase with relaxed tRNA specificity since it is able to aspartylate not only its cognate tRNA(Asp) but also tRNA(Asn). Reaction proceeds in two steps: L-aspartate is first activated by ATP to form Asp-AMP and then transferred to the acceptor end of tRNA(Asp/Asn). The protein is Aspartate--tRNA(Asp/Asn) ligase of Rickettsia africae (strain ESF-5).